Reading from the N-terminus, the 220-residue chain is Large ribosomal subunit protein bL21 (220 aa).

Positions 109–158 (SKKVAAKPATSEEKAAEEKPAKAKKEAAEKGASPRETKAAPLFSAPEGEP) are disordered. Basic and acidic residues predominate over residues 118 to 146 (TSEEKAAEEKPAKAKKEAAEKGASPRETK).

This sequence belongs to the bacterial ribosomal protein bL21 family. Part of the 50S ribosomal subunit. Contacts protein L20.

In terms of biological role, this protein binds to 23S rRNA in the presence of protein L20. The protein is Large ribosomal subunit protein bL21 of Chelativorans sp. (strain BNC1).